The sequence spans 546 residues: Chaperonin GroEL (546 aa).

ATP contacts are provided by residues 30 to 33 (TLGP), K51, 87 to 91 (DGTTT), G415, and D496. Residues 526 to 546 (PEPKSAPAGGMGGMGGMDGMM) form a disordered region. Residues 534-546 (GGMGGMGGMDGMM) are compositionally biased toward gly residues.

It belongs to the chaperonin (HSP60) family. Forms a cylinder of 14 subunits composed of two heptameric rings stacked back-to-back. Interacts with the co-chaperonin GroES.

It localises to the cytoplasm. The catalysed reaction is ATP + H2O + a folded polypeptide = ADP + phosphate + an unfolded polypeptide.. Its function is as follows. Together with its co-chaperonin GroES, plays an essential role in assisting protein folding. The GroEL-GroES system forms a nano-cage that allows encapsulation of the non-native substrate proteins and provides a physical environment optimized to promote and accelerate protein folding. In Rhodopseudomonas palustris, this protein is Chaperonin GroEL.